The sequence spans 209 residues: Ubiquitin-conjugating enzyme E2 S (209 aa).

One can recognise a UBC core domain in the interval 14–160 (QTIRQVMREL…ARMMTEIHAQ (147 aa)). Cys98 functions as the Glycyl thioester intermediate in the catalytic mechanism. Positions 164 to 209 (CAAGAAGDSKDDDGPSTKKHAGLDKKLQDKKKEKLLKEKKRMLKRL) are disordered. A compositionally biased stretch (basic and acidic residues) spans 171 to 199 (DSKDDDGPSTKKHAGLDKKLQDKKKEKLL). Positions 200–209 (KEKKRMLKRL) are enriched in basic residues.

The protein belongs to the ubiquitin-conjugating enzyme family.

The catalysed reaction is S-ubiquitinyl-[E1 ubiquitin-activating enzyme]-L-cysteine + [E2 ubiquitin-conjugating enzyme]-L-cysteine = [E1 ubiquitin-activating enzyme]-L-cysteine + S-ubiquitinyl-[E2 ubiquitin-conjugating enzyme]-L-cysteine.. It functions in the pathway protein modification; protein ubiquitination. In terms of biological role, catalyzes the covalent attachment of ubiquitin to other proteins. Acts as an essential factor of the anaphase promoting complex/cyclosome (APC/C), a cell cycle-regulated ubiquitin ligase that controls progression through mitosis. Acts by specifically elongating polyubiquitin chains initiated by the E2 enzyme vih/UbcH10 on APC/C substrates, enhancing the degradation of APC/C substrates by the proteasome and promoting mitotic exit. The protein is Ubiquitin-conjugating enzyme E2 S of Drosophila ananassae (Fruit fly).